A 298-amino-acid polypeptide reads, in one-letter code: MDKNKVKLAIAPIGWTNDDMPELGKENSFQQIVSEMALAGFTGSEVGSKYPRDPAVLKPMLDIRGLEIVNAWFSTFFANGDREKTLDEFINHRDFLHAMGAKVIGCSEQSLSIQGTAKAVLEEKPHFSDEQWRLTVEGYNQLAKLAAEKGMTVGLHHHMGTAIQTCAEVDRFMAQTHDDVYLLFDTGHAYYSEGSQQAMLAMLEKHLARINHVHLKDVRDEVVAEVKAQRLSFLEGVKRGTFTVPGDGVIDFDPVFKILDDSGYRGWMVVEAEQDPARANPFEYALKARRYIRQHAGL.

The protein belongs to the IolE/MocC family. The cofactor is glutathione. Co(2+) is required as a cofactor. Mn(2+) serves as cofactor.

It catalyses the reaction scyllo-inosose = 3D-3,5/4-trihydroxycyclohexane-1,2-dione + H2O. Functionally, catalyzes the dehydration of inosose (2-keto-myo-inositol, 2KMI or 2,4,6/3,5-pentahydroxycyclohexanone) to 3D-(3,5/4)-trihydroxycyclohexane-1,2-dione (D-2,3-diketo-4-deoxy-epi-inositol). The chain is Inosose dehydratase from Erwinia tasmaniensis (strain DSM 17950 / CFBP 7177 / CIP 109463 / NCPPB 4357 / Et1/99).